The chain runs to 124 residues: Small ribosomal subunit protein uS12 (124 aa).

The segment at 8–30 (IRSARQDTEKQTKSPALKSCPQR) is disordered. Residue Asp-89 is modified to 3-methylthioaspartic acid. Positions 103–124 (DTAGVKDRKQSRSKYGAKKPKA) are disordered. Over residues 113–124 (SRSKYGAKKPKA) the composition is skewed to basic residues.

It belongs to the universal ribosomal protein uS12 family. As to quaternary structure, part of the 30S ribosomal subunit. Contacts proteins S8 and S17. May interact with IF1 in the 30S initiation complex.

Functionally, with S4 and S5 plays an important role in translational accuracy. Interacts with and stabilizes bases of the 16S rRNA that are involved in tRNA selection in the A site and with the mRNA backbone. Located at the interface of the 30S and 50S subunits, it traverses the body of the 30S subunit contacting proteins on the other side and probably holding the rRNA structure together. The combined cluster of proteins S8, S12 and S17 appears to hold together the shoulder and platform of the 30S subunit. The polypeptide is Small ribosomal subunit protein uS12 (Trichodesmium erythraeum (strain IMS101)).